A 550-amino-acid chain; its full sequence is Glucose-6-phosphate isomerase (550 aa).

Glu356 functions as the Proton donor in the catalytic mechanism. Catalysis depends on residues His387 and Lys515.

Belongs to the GPI family.

The protein resides in the cytoplasm. It catalyses the reaction alpha-D-glucose 6-phosphate = beta-D-fructose 6-phosphate. It participates in carbohydrate biosynthesis; gluconeogenesis. Its pathway is carbohydrate degradation; glycolysis; D-glyceraldehyde 3-phosphate and glycerone phosphate from D-glucose: step 2/4. Catalyzes the reversible isomerization of glucose-6-phosphate to fructose-6-phosphate. This Aliivibrio fischeri (strain MJ11) (Vibrio fischeri) protein is Glucose-6-phosphate isomerase.